The following is a 419-amino-acid chain: MLSLRTSISRIQPCLFIRASSYQTEATQPKFQDKIRIRIQGGDGGQGCSSFIKEKFRPYGPPDGGNGGDGGSVYVAVKPGSFNNLSHLSQIHKASNGTNGKGGNRHGSCGKSVILYVPPGTVIREISAVRSEQSLEWVQMPGKTKPPKLKKGQISFVSEATRHGKELLYYRASSMISGAAEYSLEECDTTPQILCYGGVGGLGNVHFLSENNRSPKFATKGLTGEQKLIELELKTICEIGLVGLPNAGKSTLLNCLTASKSKVGEYEFTTIYPKIGTIKTTMPDDHSSFQYRLADIPGIIKGASDGKGLGYDFLRHVERAKMLCLVIDINPKAKIPADQAFQLLWDELNKYEKNLINKVALVIANKADTAAEQDLLLLKAIVERTTKGVAVLPVSAKKQEGLEGLVRGMTQLLQQRLLV.

The 208-residue stretch at 29 to 236 folds into the Obg domain; the sequence is PKFQDKIRIR…KLIELELKTI (208 aa). Residues 237-414 form the OBG-type G domain; sequence CEIGLVGLPN…LVRGMTQLLQ (178 aa). GTP-binding positions include 243–250, 295–299, and 364–367; these read GLPNAGKS, DIPGI, and ANKA.

This sequence belongs to the TRAFAC class OBG-HflX-like GTPase superfamily. OBG GTPase family.

The protein localises to the mitochondrion. This is an uncharacterized protein from Schizosaccharomyces pombe (strain 972 / ATCC 24843) (Fission yeast).